The sequence spans 241 residues: Sugar fermentation stimulation protein homolog (241 aa).

It belongs to the SfsA family.

The sequence is that of Sugar fermentation stimulation protein homolog from Nostoc sp. (strain PCC 7120 / SAG 25.82 / UTEX 2576).